The sequence spans 327 residues: tRNA dimethylallyltransferase (327 aa).

14–21 (GPTASGKT) serves as a coordination point for ATP. 16–21 (TASGKT) serves as a coordination point for substrate. Interaction with substrate tRNA regions lie at residues 39–42 (DSAL) and 163–167 (QRIQR).

It belongs to the IPP transferase family. As to quaternary structure, monomer. The cofactor is Mg(2+).

It carries out the reaction adenosine(37) in tRNA + dimethylallyl diphosphate = N(6)-dimethylallyladenosine(37) in tRNA + diphosphate. In terms of biological role, catalyzes the transfer of a dimethylallyl group onto the adenine at position 37 in tRNAs that read codons beginning with uridine, leading to the formation of N6-(dimethylallyl)adenosine (i(6)A). The polypeptide is tRNA dimethylallyltransferase (Xanthomonas oryzae pv. oryzae (strain MAFF 311018)).